The following is a 1700-amino-acid chain: Rho guanine nucleotide exchange factor 28 (1700 aa).

A disordered region spans residues 288 to 343 (TEKATMPSGAAETEEEVRNLESGRSPSEEEEDAKSIKSQVDGPSEHEDQDRLPLDR). 2 positions are modified to phosphoserine: S312 and S314. The segment covering 330–343 (PSEHEDQDRLPLDR) has biased composition (basic and acidic residues). S478 carries the post-translational modification Phosphoserine. The disordered stretch occupies residues 483-532 (VADSEGEGGSEPPICYAVGSQSSPRTGLPSGDELDSFETNTEPDCNISRT). A Phosphoserine modification is found at S623. A Phorbol-ester/DAG-type zinc finger spans residues 651 to 698 (RHQFVPGTFSGVLQCSGCDKTLLGKESLQCANCKANTHKGCKDAVPPC). Residues 846-1041 (KRQDVIFELM…KDMIAAVDLK (196 aa)) enclose the DH domain. The 90-residue stretch at 1095–1184 (ATGRFKDILA…NWMRRIQQAV (90 aa)) folds into the PH domain. 2 disordered regions span residues 1184-1205 (VESC…RRKA) and 1289-1328 (KMGD…TEGT). Over residues 1191–1205 (EGGRTSESDEERRKA) the composition is skewed to basic and acidic residues. The tract at residues 1292 to 1301 (DVSQSSEESP) is interaction with PTK2/FAK1; required for regulation of axonal branching and synapse formation. A compositionally biased stretch (polar residues) spans 1309–1325 (TPSTQDVPASPTASLVT). Residues 1369 to 1380 (IIQAIQNLTRLL) form a mediates cytoplasmic retention and interaction with YWHAH region. Residues 1421-1522 (QEKSRYLEKQ…RERQKMRVQQ (102 aa)) adopt a coiled-coil conformation. The segment at 1421–1700 (QEKSRYLEKQ…DGAEENILYL (280 aa)) is interaction with microtubules. The interval 1493-1524 (QLQEYQQSLERLREGQRMVERERQKMRVQQGL) is RNA-binding. S1535 carries the post-translational modification Phosphoserine. The tract at residues 1563-1576 (FINEAFGHMSLNTS) is mediates cytoplasmic retention and interaction with MAPK8IP1. Positions 1602 to 1700 (SESPTELKID…DGAEENILYL (99 aa)) are disordered. A Phosphoserine modification is found at S1604. The segment covering 1647–1663 (DLDSFQSESSSPQDSNQ) has biased composition (low complexity). The segment covering 1664–1675 (RGPQPQTLTTEA) has biased composition (polar residues).

In terms of assembly, homooligomer; forms some cytoplasmic aggregates. Forms a complex with MAPK8 and MAPK8IP1. Interacts with RHOA. Interacts with microtubules. Interacts with YWHAE and YWHAH. Interacts with PTK2/FAK1. Interacts with NEFL. Interacts with CTNND2; prevents interaction with RHOA. Post-translationally, phosphorylated on tyrosine upon stimulation of cells by laminin. In terms of tissue distribution, highly enriched in the brain (at protein level). Also detected in lung and kidney.

The protein resides in the cytoplasm. It localises to the cell membrane. Functionally, functions as a RHOA-specific guanine nucleotide exchange factor regulating signaling pathways downstream of integrins and growth factor receptors. Functions in axonal branching, synapse formation and dendritic morphogenesis. Also functions in focal adhesion formation, cell motility and B-lymphocytes activation. May regulate NEFL expression and aggregation and play a role in apoptosis. This Mus musculus (Mouse) protein is Rho guanine nucleotide exchange factor 28 (Arhgef28).